Reading from the N-terminus, the 549-residue chain is Dihydroxy-acid dehydratase (549 aa).

Position 78 (Asp78) interacts with Mg(2+). Residue Cys119 coordinates [2Fe-2S] cluster. The Mg(2+) site is built by Asp120 and Lys121. Position 121 is an N6-carboxylysine (Lys121). Cys192 lines the [2Fe-2S] cluster pocket. Glu439 serves as a coordination point for Mg(2+). The Proton acceptor role is filled by Ser465.

Belongs to the IlvD/Edd family. Homodimer. Requires [2Fe-2S] cluster as cofactor. It depends on Mg(2+) as a cofactor.

It catalyses the reaction (2R)-2,3-dihydroxy-3-methylbutanoate = 3-methyl-2-oxobutanoate + H2O. It carries out the reaction (2R,3R)-2,3-dihydroxy-3-methylpentanoate = (S)-3-methyl-2-oxopentanoate + H2O. It participates in amino-acid biosynthesis; L-isoleucine biosynthesis; L-isoleucine from 2-oxobutanoate: step 3/4. It functions in the pathway amino-acid biosynthesis; L-valine biosynthesis; L-valine from pyruvate: step 3/4. Functions in the biosynthesis of branched-chain amino acids. Catalyzes the dehydration of (2R,3R)-2,3-dihydroxy-3-methylpentanoate (2,3-dihydroxy-3-methylvalerate) into 2-oxo-3-methylpentanoate (2-oxo-3-methylvalerate) and of (2R)-2,3-dihydroxy-3-methylbutanoate (2,3-dihydroxyisovalerate) into 2-oxo-3-methylbutanoate (2-oxoisovalerate), the penultimate precursor to L-isoleucine and L-valine, respectively. This is Dihydroxy-acid dehydratase from Endomicrobium trichonymphae.